Here is a 330-residue protein sequence, read N- to C-terminus: Ketol-acid reductoisomerase (NADP(+)) (330 aa).

One can recognise a KARI N-terminal Rossmann domain in the interval 2-182; sequence VKIFYDKDVT…GLTKVGVIQT (181 aa). Residues 25 to 28, Arg48, Ser53, and 83 to 86 each bind NADP(+); these read YGSQ and DEVQ. The active site involves His108. Gly134 contributes to the NADP(+) binding site. The KARI C-terminal knotted domain occupies 183 to 328; sequence TFREETETDL…KELRKMCGLE (146 aa). Positions 191, 195, 227, and 231 each coordinate Mg(2+). Substrate is bound at residue Ser252.

It belongs to the ketol-acid reductoisomerase family. The cofactor is Mg(2+).

The catalysed reaction is (2R)-2,3-dihydroxy-3-methylbutanoate + NADP(+) = (2S)-2-acetolactate + NADPH + H(+). It catalyses the reaction (2R,3R)-2,3-dihydroxy-3-methylpentanoate + NADP(+) = (S)-2-ethyl-2-hydroxy-3-oxobutanoate + NADPH + H(+). The protein operates within amino-acid biosynthesis; L-isoleucine biosynthesis; L-isoleucine from 2-oxobutanoate: step 2/4. It participates in amino-acid biosynthesis; L-valine biosynthesis; L-valine from pyruvate: step 2/4. Involved in the biosynthesis of branched-chain amino acids (BCAA). Catalyzes an alkyl-migration followed by a ketol-acid reduction of (S)-2-acetolactate (S2AL) to yield (R)-2,3-dihydroxy-isovalerate. In the isomerase reaction, S2AL is rearranged via a Mg-dependent methyl migration to produce 3-hydroxy-3-methyl-2-ketobutyrate (HMKB). In the reductase reaction, this 2-ketoacid undergoes a metal-dependent reduction by NADPH to yield (R)-2,3-dihydroxy-isovalerate. This chain is Ketol-acid reductoisomerase (NADP(+)), found in Methanocaldococcus jannaschii (strain ATCC 43067 / DSM 2661 / JAL-1 / JCM 10045 / NBRC 100440) (Methanococcus jannaschii).